The following is a 127-amino-acid chain: Small ribosomal subunit protein uS11 (127 aa).

It belongs to the universal ribosomal protein uS11 family. As to quaternary structure, part of the 30S ribosomal subunit. Interacts with proteins S7 and S18. Binds to IF-3.

Located on the platform of the 30S subunit, it bridges several disparate RNA helices of the 16S rRNA. Forms part of the Shine-Dalgarno cleft in the 70S ribosome. In Chlorobium luteolum (strain DSM 273 / BCRC 81028 / 2530) (Pelodictyon luteolum), this protein is Small ribosomal subunit protein uS11.